Reading from the N-terminus, the 1221-residue chain is Deubiquitinating protein VCPIP1 (1221 aa).

A compositionally biased stretch (pro residues) spans 1-19 (MSQPPPPPPLPPPPPPPEA). The interval 1–40 (MSQPPPPPPLPPPPPPPEAPQTSSSLAAAATPGGLSKRRD) is disordered. Positions 207 to 360 (LIPVHVDGDG…RNHYIPLVGI (154 aa)) constitute an OTU domain. The active site involves Asp-215. The Nucleophile role is filled by Cys-218. Residue His-353 is part of the active site. N6-acetyllysine is present on Lys-407. Disordered regions lie at residues 724–778 (SVMQ…KIRI) and 988–1009 (EATT…GSGG). 2 positions are modified to phosphoserine: Ser-746 and Ser-756. Over residues 754–770 (PSSAPATPTKAPYSPTT) the composition is skewed to low complexity. At Thr-762 the chain carries Phosphothreonine. Phosphoserine is present on residues Ser-767, Ser-993, Ser-997, and Ser-1076. 2 disordered regions span residues 1117–1177 (ASMD…TDSR) and 1189–1221 (RSKA…MDHS). The segment covering 1143 to 1156 (VSSSVRPGNLQTGL) has biased composition (polar residues). Low complexity predominate over residues 1162 to 1173 (LTGGTENLNTET). Residues Ser-1197 and Ser-1206 each carry the phosphoserine modification. Over residues 1198–1208 (MEEPEEMDSQD) the composition is skewed to acidic residues. Polar residues predominate over residues 1209–1221 (AETTNTTEPMDHS).

Binds VCP and the ternary complex containing STX5A, NSFL1C and VCP. In terms of processing, phosphorylated at Ser-1206 by ATM or ATR following induction of covalent DNA-protein cross-links (DPCs). In terms of tissue distribution, widely expressed.

It localises to the nucleus. It is found in the cytoplasm. Its subcellular location is the endoplasmic reticulum. The protein resides in the golgi apparatus. The protein localises to the golgi stack. The enzyme catalyses Thiol-dependent hydrolysis of ester, thioester, amide, peptide and isopeptide bonds formed by the C-terminal Gly of ubiquitin (a 76-residue protein attached to proteins as an intracellular targeting signal).. Deubiquitinating enzyme involved in DNA repair and reassembly of the Golgi apparatus and the endoplasmic reticulum following mitosis. Necessary for VCP-mediated reassembly of Golgi stacks after mitosis. Plays a role in VCP-mediated formation of transitional endoplasmic reticulum (tER). Mediates dissociation of the ternary complex containing STX5A, NSFL1C and VCP. Also involved in DNA repair following phosphorylation by ATM or ATR: acts by catalyzing deubiquitination of SPRTN, thereby promoting SPRTN recruitment to chromatin and subsequent proteolytic cleavage of covalent DNA-protein cross-links (DPCs). Hydrolyzes 'Lys-11'- and 'Lys-48'-linked polyubiquitin chains. This is Deubiquitinating protein VCPIP1 from Rattus norvegicus (Rat).